Consider the following 128-residue polypeptide: EPIDERMAL PATTERNING FACTOR-like protein 2 (128 aa).

Residues 1–28 (MVWSSNMSSFLLILLILNSTHFSLMANG) form the signal peptide. Cystine bridges form between Cys60–Cys119, Cys65–Cys71, and Cys68–Cys121. Polar residues predominate over residues 79–90 (NPQTKLHSPLTT). The tract at residues 79–100 (NPQTKLHSPLTTSSSSSSETIH) is disordered.

It belongs to the plant cysteine rich small secretory peptide family. Epidermal patterning factor subfamily.

The protein localises to the secreted. In terms of biological role, controls stomatal patterning. The polypeptide is EPIDERMAL PATTERNING FACTOR-like protein 2 (Arabidopsis thaliana (Mouse-ear cress)).